A 126-amino-acid chain; its full sequence is Diadenosine hexaphosphate hydrolase (126 aa).

Residues Met1 to Leu121 form the Nudix hydrolase domain. Substrate is bound by residues Asp21–Met23 and Lys30–His32. The Nudix box motif lies at Gly31–Gly52. Residues Glu46 and Glu50 each contribute to the Mg(2+) site. Substrate-binding positions include Tyr66 to Asn68, Arg74, and Glu112.

Belongs to the Nudix hydrolase family. Monomer. Mg(2+) serves as cofactor.

The catalysed reaction is P(1),P(6)-bis(5'-adenosyl) hexaphosphate + H2O = 2 ATP + 2 H(+). It carries out the reaction P(1),P(5)-bis(5'-adenosyl) pentaphosphate + H2O = ADP + ATP + 2 H(+). The enzyme catalyses P(1),P(4)-bis(5'-adenosyl) tetraphosphate + H2O = AMP + ATP + 2 H(+). With respect to regulation, strongly inhibited by fluoride ions. Its function is as follows. Specifically hydrolyzes (di)adenosine polyphosphates but not ATP or diadenosine triphosphate, generating ATP as the product. Diadenosine hexaphosphate (Ap6A) is the preferred substrate and hydrolysis yields 2 ATP. It is the only enzyme that symmetrically hydrolyzes Ap6A. It also hydrolyzes diadenosine pentaphosphate (Ap5A), diadenosine tetraphosphate (Ap4A) and adenosine tetraphosphate (p4A). The protein is Diadenosine hexaphosphate hydrolase of Thermus thermophilus.